Reading from the N-terminus, the 357-residue chain is 3-isopropylmalate dehydrogenase (357 aa).

Substrate is bound by residues R97, R107, R135, and D224. Residues D224, D248, and D252 each coordinate Mg(2+). An NAD(+)-binding site is contributed by 282–294 (GSAPDIAGQDKAN).

Belongs to the isocitrate and isopropylmalate dehydrogenases family. LeuB type 1 subfamily. Homodimer. It depends on Mg(2+) as a cofactor. Mn(2+) serves as cofactor.

It is found in the cytoplasm. The enzyme catalyses (2R,3S)-3-isopropylmalate + NAD(+) = 4-methyl-2-oxopentanoate + CO2 + NADH. Its pathway is amino-acid biosynthesis; L-leucine biosynthesis; L-leucine from 3-methyl-2-oxobutanoate: step 3/4. Functionally, catalyzes the oxidation of 3-carboxy-2-hydroxy-4-methylpentanoate (3-isopropylmalate) to 3-carboxy-4-methyl-2-oxopentanoate. The product decarboxylates to 4-methyl-2 oxopentanoate. The chain is 3-isopropylmalate dehydrogenase from Parasynechococcus marenigrum (strain WH8102).